We begin with the raw amino-acid sequence, 439 residues long: NAD kinase (439 aa).

Phosphoserine occurs at positions 46, 48, 50, 55, and 64.

This sequence belongs to the NAD kinase family. It depends on a divalent metal cation as a cofactor.

It carries out the reaction NAD(+) + ATP = ADP + NADP(+) + H(+). The chain is NAD kinase (Nadk) from Mus musculus (Mouse).